Consider the following 435-residue polypeptide: Trigger factor (435 aa).

One can recognise a PPIase FKBP-type domain in the interval 163 to 248 (DDITLIDFTG…INEIKRKELA (86 aa)).

Belongs to the FKBP-type PPIase family. Tig subfamily.

Its subcellular location is the cytoplasm. It carries out the reaction [protein]-peptidylproline (omega=180) = [protein]-peptidylproline (omega=0). Functionally, involved in protein export. Acts as a chaperone by maintaining the newly synthesized protein in an open conformation. Functions as a peptidyl-prolyl cis-trans isomerase. This chain is Trigger factor, found in Desulforamulus reducens (strain ATCC BAA-1160 / DSM 100696 / MI-1) (Desulfotomaculum reducens).